The following is a 541-amino-acid chain: MPKLLYYAEDARGALQRGVDHLADTVKVTLGPKGRNVVLATSGNKVTITNDGVTIAREIELDERDENLGAQLVKEVATKTNDVAGDGTTTATVLAQAMVREGLRNVAAGANPLALKRGIDAAVTAISDRLLAQAREVATKDEIANVATISAQDPAVGAVIADAFDKVGKDGVITVEESNTMGLELEFVEGLQFDKGYISPYFITDPERMEAVLDNPYILLHEGKISNAMDFVPLLEKVVQAGRPLLVIAEDVEGDALATLVVNKIRGTFSSVAVKAPGFGDRRKAMLGDMAVLTGAQVVSPEVGLKLDEVGLEVLGTARRVRVTRDDTTIVEGGGSAEAIQDRIRQIRAQIDQTDSDWDREKLQERLAKLAGGVAVIRVGAATEVELKEKKHRLEDAVSATRAAIEEGIVAGGGSALLHASSALDSLELTGDEAVGASIVRKAAAEPLRWIAENAGFEGYVVCSRVRDLPVGHGFDAQTGEYTDLVARGIIDPVKVTRSALTNAASVVGLLLTTEAIVVDKPEEKPESAGHNHGHGHHHPH.

Residues 29 to 32 (TLGP), 86 to 90 (DGTTT), glycine 413, and aspartate 492 each bind ATP.

Belongs to the chaperonin (HSP60) family. As to quaternary structure, forms a cylinder of 14 subunits composed of two heptameric rings stacked back-to-back. Interacts with the co-chaperonin GroES.

The protein localises to the cytoplasm. The catalysed reaction is ATP + H2O + a folded polypeptide = ADP + phosphate + an unfolded polypeptide.. In terms of biological role, together with its co-chaperonin GroES, plays an essential role in assisting protein folding. The GroEL-GroES system forms a nano-cage that allows encapsulation of the non-native substrate proteins and provides a physical environment optimized to promote and accelerate protein folding. The sequence is that of Chaperonin GroEL 2 from Acidothermus cellulolyticus (strain ATCC 43068 / DSM 8971 / 11B).